The chain runs to 513 residues: Activin receptor type-2B (513 aa).

The N-terminal stretch at 1-18 (MTAPWAALALLWGSLCAG) is a signal peptide. At 19–137 (SGRGEAETRE…PPPTAPTLLT (119 aa)) the chain is on the extracellular side. Cystine bridges form between Cys-29-Cys-59, Cys-49-Cys-77, Cys-84-Cys-103, Cys-90-Cys-102, and Cys-104-Cys-109. N-linked (GlcNAc...) asparagine glycosylation is found at Asn-42 and Asn-65. The chain crosses the membrane as a helical span at residues 138-158 (VLAYSLLPIGGLSLIVLLAFW). Topologically, residues 159 to 513 (MYRHRKPPYG…VDLLPKESSI (355 aa)) are cytoplasmic. A Protein kinase domain is found at 190–481 (LQLLEIKARG…AGCVEERVSL (292 aa)). ATP is bound by residues 196–204 (KARGRFGCV) and Lys-217. Asp-322 acts as the Proton acceptor in catalysis. The interval 492–513 (DCLVSLVTSVTNVDLLPKESSI) is interaction with DYNLT1.

Belongs to the protein kinase superfamily. TKL Ser/Thr protein kinase family. TGFB receptor subfamily. In terms of assembly, forms an activin receptor complex with activin type II receptors such as ACVR1B. Interacts with VPS39. Interacts with DYNLT1. Interacts with BMP3. Interacts with BMP2. Mg(2+) is required as a cofactor. Requires Mn(2+) as cofactor. Post-translationally, phosphorylated. Constitutive phosphorylation is in part catalyzed by its own kinase activity.

Its subcellular location is the cell membrane. The enzyme catalyses L-threonyl-[receptor-protein] + ATP = O-phospho-L-threonyl-[receptor-protein] + ADP + H(+). It catalyses the reaction L-seryl-[receptor-protein] + ATP = O-phospho-L-seryl-[receptor-protein] + ADP + H(+). In terms of biological role, transmembrane serine/threonine kinase activin type-2 receptor forming an activin receptor complex with activin type-1 serine/threonine kinase receptors (ACVR1, ACVR1B or ACVR1c). Transduces the activin signal from the cell surface to the cytoplasm and is thus regulating many physiological and pathological processes including neuronal differentiation and neuronal survival, hair follicle development and cycling, FSH production by the pituitary gland, wound healing, extracellular matrix production, immunosuppression and carcinogenesis. Activin is also thought to have a paracrine or autocrine role in follicular development in the ovary. Within the receptor complex, the type-2 receptors act as a primary activin receptors (binds activin-A/INHBA, activin-B/INHBB as well as inhibin-A/INHA-INHBA). The type-1 receptors like ACVR1B act as downstream transducers of activin signals. Activin binds to type-2 receptor at the plasma membrane and activates its serine-threonine kinase. The activated receptor type-2 then phosphorylates and activates the type-1 receptor. Once activated, the type-1 receptor binds and phosphorylates the SMAD proteins SMAD2 and SMAD3, on serine residues of the C-terminal tail. Soon after their association with the activin receptor and subsequent phosphorylation, SMAD2 and SMAD3 are released into the cytoplasm where they interact with the common partner SMAD4. This SMAD complex translocates into the nucleus where it mediates activin-induced transcription. Inhibitory SMAD7, which is recruited to ACVR1B through FKBP1A, can prevent the association of SMAD2 and SMAD3 with the activin receptor complex, thereby blocking the activin signal. Activin signal transduction is also antagonized by the binding to the receptor of inhibin-B via the IGSF1 inhibin coreceptor. This Rattus norvegicus (Rat) protein is Activin receptor type-2B (Acvr2b).